Here is a 983-residue protein sequence, read N- to C-terminus: Receptor-type tyrosine-protein phosphatase-like N (983 aa).

Residues 1–40 (MRRPRRPGGPAGCGGSEGSGGLRLLVCLLLLSGRPGGCSA) form the signal peptide. An RESP18 homology domain region spans residues 41-137 (ISAHGCLFDR…HPRDRSGSVP (97 aa)). Residues 41-579 (ISAHGCLFDR…RQAHGISPMR (539 aa)) lie on the Lumenal side of the membrane. A disulfide bridge connects residues Cys59 and Cys68. Positions 118–133 (RIPRLRPPEPHPRDRS) are enriched in basic and acidic residues. Disordered stretches follow at residues 118-179 (RIPR…SPLS), 293-330 (RARA…SPPQ), and 399-420 (GDTA…ASST). A compositionally biased stretch (polar residues) spans 148–158 (SQGNPTGSSPA). The span at 307–326 (RAEDSSEGHEEEVLGGHGEK) shows a compositional bias: basic and acidic residues. Residues Ser311 and Ser312 each carry the phosphoserine modification. The tract at residues 453-579 (SPLGQSQPTV…RQAHGISPMR (127 aa)) is sufficient for dimerization of proICA512. 2 N-linked (GlcNAc...) asparagine glycosylation sites follow: Asn510 and Asn528. The chain crosses the membrane as a helical span at residues 580–604 (SLLLTLVALAGVAGLLVALAVALCM). Positions 605–736 (RHHSKQRDKE…PNTCATAQGE (132 aa)) are sufficient for dimerization of proICA512. Topologically, residues 605 to 983 (RHHSKQRDKE…VNAILKALPQ (379 aa)) are cytoplasmic. A disordered region spans residues 648-684 (RAEGQPEPSRVSSVSSQFSDAAQASPSSHSSTPSWCE). Over residues 652-681 (QPEPSRVSSVSSQFSDAAQASPSSHSSTPS) the composition is skewed to low complexity. Residues 713 to 973 (LAKEWQALCA…EFALTAVAEE (261 aa)) enclose the Tyrosine-protein phosphatase domain. Residue Lys758 forms a Glycyl lysine isopeptide (Lys-Gly) (interchain with G-Cter in SUMO) linkage.

It belongs to the protein-tyrosine phosphatase family. Receptor class 8 subfamily. As to quaternary structure, homodimer; shown for the unprocessed protein (proICA512) in the endoplasmic reticulum and resolved during protein maturation as ICA512-TMF seems to be predominantly monomeric in secretory granules; however, ICA512-CCF interacts with ICA512-TMF disrupting the ICA512-TMF:SNTB2 complex. The isolated lumenal RESP18 homology domain has been shown to form disulfide-linked homooligomers. Interacts (via cytoplasmic domain) with phosphorylated SNTB2; this protects PTPRN against cleavage by CAPN1 to produce ICA512-CCF. Dephosphorylation of SNTB2 upon insulin stimulation disrupts the interaction and results in PTPRN cleavage. Interacts with SNX19. ICA512-CCF interacts with PIAS4; in the nucleus. Interacts with STAT5B (phosphorylated); down-regulated by ICA512-CCF sumoylation; ICA512-CCF prevents STAT5B dephosphorylation; ICA512-CCF mediates interaction of STAT5B with PIAS4. Interacts (via RESP18 homology domain) with insulin and proinsulin. Interacts with PTPRN2, PTPRA and PTPRE. In terms of processing, subject to proteolytic cleavage at multiple sites. Subject to cleavage on a pair of basic residues. Following exocytosis of secretory granules in pancreatic beta-cells ICA512-TMF located in the plasma-membrane is cleaved by mu-type calpain CPN1 to yield ICA512-CCF. N-glycosylated. Post-translationally, O-glycosylated. In terms of processing, sumoylated at two sites including Lys-758. Sumoylation decreases interaction with STAT5. Detected in pancreas islets. Detected in pancreas alpha, beta and delta cells, and in chromaffin cells in the adrenal medulla. Detected in amygdala, hypothalamus, autonomous nerve fibers and ganglia, especially at synaptic contacts. Detected in pituitary (at protein level). Detected in brain, specifically in cerebral cortex, diencephalon and brain stem.

The protein localises to the membrane. It localises to the cytoplasmic vesicle. Its subcellular location is the secretory vesicle membrane. It is found in the perikaryon. The protein resides in the cell projection. The protein localises to the axon. It localises to the synapse. Its subcellular location is the cell membrane. It is found in the endosome. The protein resides in the nucleus. Its function is as follows. Plays a role in vesicle-mediated secretory processes. Required for normal accumulation of secretory vesicles in hippocampus, pituitary and pancreatic islets. Required for the accumulation of normal levels of insulin-containing vesicles and preventing their degradation. Plays a role in insulin secretion in response to glucose stimuli. Required for normal accumulation of the neurotransmitters norepinephrine, dopamine and serotonin in the brain. In females, but not in males, required for normal accumulation and secretion of pituitary hormones, such as luteinizing hormone (LH) and follicle-stimulating hormone (FSH). Required to maintain normal levels of renin expression and renin release. Seems to lack intrinsic enzyme activity. ICA512-TMF regulates dynamics and exocytosis of insulin secretory granules (SGs); binding of ICA512-TMF to SNTB2/beta-2-syntrophin is proposed to restrain SGs mobility and exocytosis by tethering them to the actin cytoskeleton depending on UTRN; the function is inhibited by cytoplasmic ICA512-CFF dimerizing with ICA512-TMF and displacing SNTB2. Functionally, ICA512-CCF translocated to the nucleus promotes expression of insulin and other granule-related genes; the function implicates binding to and regulating activity of STAT5B probably by preventing its dephosphorylation and potentially by inducing its sumoylation by recruiting PIAS4. Enhances pancreatic beta-cell proliferation by converging with signaling by STAT5B and STAT3. ICA512-CCF located in the cytoplasm regulates dynamics and exocytosis of insulin secretory granules (SGs) by dimerizing with ICA512-TMF and displacing SNTB2 thus enhancing SGs mobility and exocytosis. The protein is Receptor-type tyrosine-protein phosphatase-like N (Ptprn) of Rattus norvegicus (Rat).